A 613-amino-acid chain; its full sequence is Dihydroxy-acid dehydratase (613 aa).

A Mg(2+)-binding site is contributed by Asp81. A [2Fe-2S] cluster-binding site is contributed by Cys122. 2 residues coordinate Mg(2+): Asp123 and Lys124. At Lys124 the chain carries N6-carboxylysine. [2Fe-2S] cluster is bound at residue Cys193. Glu489 provides a ligand contact to Mg(2+). Residue Ser515 is the Proton acceptor of the active site.

The protein belongs to the IlvD/Edd family. In terms of assembly, homodimer. It depends on [2Fe-2S] cluster as a cofactor. The cofactor is Mg(2+).

The catalysed reaction is (2R)-2,3-dihydroxy-3-methylbutanoate = 3-methyl-2-oxobutanoate + H2O. It catalyses the reaction (2R,3R)-2,3-dihydroxy-3-methylpentanoate = (S)-3-methyl-2-oxopentanoate + H2O. It participates in amino-acid biosynthesis; L-isoleucine biosynthesis; L-isoleucine from 2-oxobutanoate: step 3/4. Its pathway is amino-acid biosynthesis; L-valine biosynthesis; L-valine from pyruvate: step 3/4. Functionally, functions in the biosynthesis of branched-chain amino acids. Catalyzes the dehydration of (2R,3R)-2,3-dihydroxy-3-methylpentanoate (2,3-dihydroxy-3-methylvalerate) into 2-oxo-3-methylpentanoate (2-oxo-3-methylvalerate) and of (2R)-2,3-dihydroxy-3-methylbutanoate (2,3-dihydroxyisovalerate) into 2-oxo-3-methylbutanoate (2-oxoisovalerate), the penultimate precursor to L-isoleucine and L-valine, respectively. This Pseudomonas fluorescens (strain Pf0-1) protein is Dihydroxy-acid dehydratase.